The following is a 1097-amino-acid chain: uncharacterized protein (1097 aa).

A coiled-coil region spans residues 31 to 1087 (LLNVARQEEE…TALNKLRTRH (1057 aa)).

It belongs to the TRAFAC class myosin-kinesin ATPase superfamily. Myosin family. In terms of tissue distribution, specifically expressed in muscles of the head including temporalis and tensor veli palatini.

Has most probably lost the function in masticatory muscles contraction suspected for its homologs in dog (AC F1PT61) and apes. This is an uncharacterized protein from Homo sapiens (Human).